Reading from the N-terminus, the 47-residue chain is Cytochrome b559 subunit beta (47 aa).

Residues 22-38 (WLAVHTLAIPTVFFLGA) traverse the membrane as a helical segment. Histidine 26 is a heme binding site.

It belongs to the PsbE/PsbF family. In terms of assembly, heterodimer of an alpha subunit and a beta subunit. PSII is composed of 1 copy each of membrane proteins PsbA, PsbB, PsbC, PsbD, PsbE, PsbF, PsbH, PsbI, PsbJ, PsbK, PsbL, PsbM, PsbT, PsbX, PsbY, PsbZ, Psb30/Ycf12, peripheral proteins PsbO, CyanoQ (PsbQ), PsbU, PsbV and a large number of cofactors. It forms dimeric complexes. Requires heme b as cofactor.

It localises to the cellular thylakoid membrane. This b-type cytochrome is tightly associated with the reaction center of photosystem II (PSII). PSII is a light-driven water:plastoquinone oxidoreductase that uses light energy to abstract electrons from H(2)O, generating O(2) and a proton gradient subsequently used for ATP formation. It consists of a core antenna complex that captures photons, and an electron transfer chain that converts photonic excitation into a charge separation. The polypeptide is Cytochrome b559 subunit beta (Synechococcus sp. (strain JA-3-3Ab) (Cyanobacteria bacterium Yellowstone A-Prime)).